The chain runs to 360 residues: MWSSIISFLFFSVALCQPLLFQKRSSNVSDFISFNASLPNVTIFAMGGTIAGYASSSTETVDYAAGSVGIATLVDAVPAIKNFSNIRGVQVTNVGSEELTPANVLNLTQLILAEVAKPDVHGIVVTHGTDSLEETAIFLDMTVNTTKPIVVVGAMRPSTAISADGPMNLLNAVVVAASNRSIGRGTMILLNDRIGSAFYTTKTNGNMLDTFKSYEAGFLGMILDQRPHFFYSPATPTGKVHFDVSNTTELPAVEILYGYQGLNPNLAKAAVDLGAKGLVLAGMGAASWTDPGNEVIDGLISNQSIPVVYSHRTMDGFSDYYYNGIPAYFQNPQKARYMLMLSINAGYSIQNITDIFSLEY.

The signal sequence occupies residues 1 to 16 (MWSSIISFLFFSVALC). 3 N-linked (GlcNAc...) asparagine glycosylation sites follow: Asn-27, Asn-35, and Asn-40. The 321-residue stretch at 39 to 359 (PNVTIFAMGG…QNITDIFSLE (321 aa)) folds into the Asparaginase/glutaminase domain. The active-site O-isoaspartyl threonine intermediate is the Thr-49. Asn-82 is a glycosylation site (N-linked (GlcNAc...) asparagine). Substrate is bound at residue Ser-96. The N-linked (GlcNAc...) asparagine glycan is linked to Asn-106. Substrate is bound at residue 129–130 (TD). Asn-144, Asn-179, Asn-246, Asn-302, and Asn-351 each carry an N-linked (GlcNAc...) asparagine glycan.

This sequence belongs to the asparaginase 1 family.

It is found in the secreted. The protein resides in the cell wall. The enzyme catalyses L-asparagine + H2O = L-aspartate + NH4(+). In Schizosaccharomyces pombe (strain 972 / ATCC 24843) (Fission yeast), this protein is Probable L-asparaginase 3.